Consider the following 652-residue polypeptide: DNA ligase (652 aa).

NAD(+) contacts are provided by residues 29 to 33 (DSEYD), 78 to 79 (SL), and glutamate 107. The N6-AMP-lysine intermediate role is filled by lysine 109. NAD(+) is bound by residues arginine 130, glutamate 164, lysine 278, and lysine 302. 4 residues coordinate Zn(2+): cysteine 395, cysteine 398, cysteine 413, and cysteine 418. One can recognise a BRCT domain in the interval 577-652 (VADAALSGLT…VRDEAWLESL (76 aa)).

This sequence belongs to the NAD-dependent DNA ligase family. LigA subfamily. Requires Mg(2+) as cofactor. It depends on Mn(2+) as a cofactor.

It catalyses the reaction NAD(+) + (deoxyribonucleotide)n-3'-hydroxyl + 5'-phospho-(deoxyribonucleotide)m = (deoxyribonucleotide)n+m + AMP + beta-nicotinamide D-nucleotide.. DNA ligase that catalyzes the formation of phosphodiester linkages between 5'-phosphoryl and 3'-hydroxyl groups in double-stranded DNA using NAD as a coenzyme and as the energy source for the reaction. It is essential for DNA replication and repair of damaged DNA. The polypeptide is DNA ligase (Streptococcus pneumoniae (strain CGSP14)).